We begin with the raw amino-acid sequence, 291 residues long: Insulin-like growth factor-binding protein 3 (291 aa).

A signal peptide spans 1-27 (MLRARPALWAAALTALTLLRGPPAARA). The IGF-binding stretch occupies residues 28–134 (GAGTMGAGPV…LRPYLLPSAS (107 aa)). The IGFBP N-terminal domain maps to 36–119 (PVVRCEPCDA…LDGRGLCANA (84 aa)). 6 cysteine pairs are disulfide-bonded: Cys-40–Cys-69, Cys-43–Cys-71, Cys-51–Cys-72, Cys-60–Cys-75, Cys-83–Cys-96, and Cys-90–Cys-116. N-linked (GlcNAc...) asparagine glycans are attached at residues Asn-118 and Asn-136. Disordered regions lie at residues 132-162 (SASG…RVPV) and 177-211 (KGHA…TEYG). Residues 146–155 (MGSTENQAGP) show a composition bias toward polar residues. At Ser-148 the chain carries Phosphoserine. The span at 177–190 (KGHAKDSQRYKVDY) shows a compositional bias: basic and acidic residues. The span at 191 to 202 (ESQSTDTQNFSS) shows a compositional bias: polar residues. The N-linked (GlcNAc...) asparagine glycan is linked to Asn-199. At Ser-201 the chain carries Phosphoserine. The Thyroglobulin type-1 domain occupies 210 to 285 (YGPCRREMED…DVKGKGDVHC (76 aa)). 3 cysteine pairs are disulfide-bonded: Cys-213–Cys-240, Cys-251–Cys-262, and Cys-264–Cys-285.

As to quaternary structure, interacts with XLKD1. Binds IGF2 more than IGF1. Forms a ternary complex of about 140 to 150 kDa with IGF1 or IGF2 and a 85 kDa glycoprotein (ALS). Interacts with humanin; humanin competes with importin KPNB1 for binding to IGFBP3, blocking IGFBP3 nuclear import and IGFBP3-mediated apoptosis. Interacts with TMEM219. Interacts with RXRA; this interaction modulates the transcriptional activity of RXRA. Interacts with LRP1; this interaction mediates cell growth inhibition independent of IGF1. Phosphorylated by FAM20C in the extracellular medium. Phosphorylated by CK2; resulting in decreased nuclear localization. As to expression, plasma; expressed by most tissues.

The protein resides in the secreted. The protein localises to the nucleus. Multifunctional protein that plays a critical role in regulating the availability of IGFs such as IGF1 and IGF2 to their receptors and thereby regulates IGF-mediated cellular processes including proliferation, differentiation, and apoptosis in a cell-type specific manner. Also exhibits IGF-independent antiproliferative and apoptotic effects mediated by its receptor TMEM219/IGFBP-3R. Inhibits the positive effect of humanin on insulin sensitivity. Promotes testicular germ cell apoptosis. Acts via LRP-1/alpha2M receptor, also known as TGF-beta type V receptor, to mediate cell growth inhibition independent of IGF1. Mechanistically, induces serine-specific dephosphorylation of IRS1 or IRS2 upon ligation to its receptor, leading to the inhibitory cascade. In the nucleus, interacts with transcription factors such as retinoid X receptor-alpha/RXRA to regulate transcriptional signaling and apoptosis. This Bos taurus (Bovine) protein is Insulin-like growth factor-binding protein 3 (IGFBP3).